Consider the following 626-residue polypeptide: MDLFNYSRRETSEVNIGAVPLGGPNPIRIQSMTNTPTQDTEACVAQAKRIVDAGGEYVRLTTQGVKEAENLMNINIGLRSTGYMVPLVADVHFSPKVADVAAQYAEKVRINPGNYVDPGRTFKQLEYTDEEYAAELQKIRDRFVPFLNICKENHTAVRIGVNHGSLSDRIMSRYGDTPEGMVESCMEFLRICVDEKFTDVVISIKASNTVVMVKTVRLLVSVMEQEGMSFPLHLGVTEAGDGEDGRIKSALGIGALLADGLGDTIRVSLSEEPEAEIPVARKLVDYITSRRNHPYIPGMEAPDFNYLSPVRRKTRPVRNIGGDHLPVVLADRMDGRMETHPQFTPDYIYAGRALPEQTEPGVQYILDADVWKGEPDTWPAFNYAQLELMETCAAELKFLFTPYMALTREVVACLKQHPEAVVVSQSNHPNRVGEHRALAHQLTVEGLQNPVIFFQHYAEDTAEDLQVKAGADMGALIFDGLCDGIYLFNQGKLSHAVIDATAFGILQAGRIRTSKTEYISCPGCGRTLFNLQSTIARVKEATSHLKGLKIGIMGCIVNGPGEMADADYGYVGAGRGKISLYKQKECIEKNIPEEEAVEKLIELIKANGDYEEKTSSLSSPKEKEDK.

Cys521, Cys524, Cys555, and Glu562 together coordinate [4Fe-4S] cluster.

Belongs to the IspG family. The cofactor is [4Fe-4S] cluster.

The catalysed reaction is (2E)-4-hydroxy-3-methylbut-2-enyl diphosphate + oxidized [flavodoxin] + H2O + 2 H(+) = 2-C-methyl-D-erythritol 2,4-cyclic diphosphate + reduced [flavodoxin]. Its pathway is isoprenoid biosynthesis; isopentenyl diphosphate biosynthesis via DXP pathway; isopentenyl diphosphate from 1-deoxy-D-xylulose 5-phosphate: step 5/6. In terms of biological role, converts 2C-methyl-D-erythritol 2,4-cyclodiphosphate (ME-2,4cPP) into 1-hydroxy-2-methyl-2-(E)-butenyl 4-diphosphate. This is 4-hydroxy-3-methylbut-2-en-1-yl diphosphate synthase (flavodoxin) from Bacteroides fragilis (strain YCH46).